Here is a 146-residue protein sequence, read N- to C-terminus: Ribosome maturation factor RimP (146 aa).

The protein belongs to the RimP family.

The protein localises to the cytoplasm. Its function is as follows. Required for maturation of 30S ribosomal subunits. This is Ribosome maturation factor RimP from Helicobacter pylori (strain J99 / ATCC 700824) (Campylobacter pylori J99).